The sequence spans 601 residues: Alpha-terpineol synthase, chloroplastic (601 aa).

The transit peptide at 1 to 47 (MSTISIHHVGILRNPLHSKSKRASINKPWSLSLPRSSSASRLVEPCR) directs the protein to the chloroplast. 2 residues coordinate Mn(2+): aspartate 357 and aspartate 361. The short motif at 357 to 361 (DDVYD) is the DDXXD motif element. Homodimerization regions lie at residues 363–369 (YGTLDEL) and 435–471 (EAEWYQSGYTPSLEEYLTIAKISIGSLPILLSVELSL). Mn(2+) contacts are provided by aspartate 499 and glutamate 507.

This sequence belongs to the terpene synthase family. As to quaternary structure, homodimer. Mn(2+) is required as a cofactor. The cofactor is Mg(2+).

Its subcellular location is the plastid. The protein resides in the chloroplast. The catalysed reaction is (2E)-geranyl diphosphate + H2O = (S)-alpha-terpineol + diphosphate. It carries out the reaction (2E)-geranyl diphosphate + H2O = (R)-alpha-terpineol + diphosphate. The protein operates within secondary metabolite biosynthesis; terpenoid biosynthesis. Its function is as follows. Involved in the biosynthesis of phenolic monoterpenes natural products. Monoterpene synthase which catalyzes the conversion of geranyl diphosphate (GPP) to alpha-terpineol (isomer is not determined). This is Alpha-terpineol synthase, chloroplastic from Thymus caespititius (Cretan thyme).